The following is a 244-amino-acid chain: Small ribosomal subunit protein eS4 (244 aa).

The S4 RNA-binding domain maps to 43-106 (LPLLLVVRDI…DENYLVLFDE (64 aa)).

The protein belongs to the eukaryotic ribosomal protein eS4 family.

The chain is Small ribosomal subunit protein eS4 from Methanococcus maripaludis (strain C6 / ATCC BAA-1332).